The following is a 440-amino-acid chain: Transposon Ty1-NL1 Gag polyprotein (440 aa).

Polar residues-rich tracts occupy residues 1–23 (MESQ…SVTS), 48–60 (TKAN…TPAS), 71–86 (SPQT…GPYQ), and 131–152 (PQYP…GNTF). 3 disordered regions span residues 1-86 (MESQ…GPYQ), 131-171 (PQYP…YVRP), and 350-425 (QQES…TEPI). The segment covering 153–165 (TDSSSADSDMTST) has biased composition (low complexity). Positions 299-401 (NNGIPINNKV…NSQSRTARAH (103 aa)) are RNA-binding. Residues 363-372 (NPSDEKKDSR) are compositionally biased toward basic and acidic residues. A compositionally biased stretch (polar residues) spans 373-412 (TYTNTTKPKSITRNSQKPNNSQSRTARAHNVSTSNNSSGP).

As to quaternary structure, homotrimer.

Its subcellular location is the cytoplasm. In terms of biological role, capsid protein (CA) is the structural component of the virus-like particle (VLP), forming the shell that encapsulates the retrotransposons dimeric RNA genome. The particles are assembled from trimer-clustered units and there are holes in the capsid shells that allow for the diffusion of macromolecules. CA also has nucleocapsid-like chaperone activity, promoting primer tRNA(i)-Met annealing to the multipartite primer-binding site (PBS), dimerization of Ty1 RNA and initiation of reverse transcription. This Saccharomyces cerevisiae (strain ATCC 204508 / S288c) (Baker's yeast) protein is Transposon Ty1-NL1 Gag polyprotein (TY1A-NL1).